A 90-amino-acid chain; its full sequence is Probable Fe(2+)-trafficking protein (90 aa).

The protein belongs to the Fe(2+)-trafficking protein family.

In terms of biological role, could be a mediator in iron transactions between iron acquisition and iron-requiring processes, such as synthesis and/or repair of Fe-S clusters in biosynthetic enzymes. The chain is Probable Fe(2+)-trafficking protein from Pseudoalteromonas atlantica (strain T6c / ATCC BAA-1087).